The sequence spans 134 residues: MKVVHTVGKRRTAIARATAKEGSGKIRINKKPLELMEPKYIKMKLMEPVILAGEALSNIDVDIDVKGGGIVSQMDATRTALGKAIVEFTGKMELKEKFLSYDRTLLVSDARRTEPHKPSKSSKGPRAKRQKSYR.

Residues 109–134 (DARRTEPHKPSKSSKGPRAKRQKSYR) form a disordered region. The segment covering 118–134 (PSKSSKGPRAKRQKSYR) has biased composition (basic residues).

This sequence belongs to the universal ribosomal protein uS9 family.

The chain is Small ribosomal subunit protein uS9 from Methanococcus maripaludis (strain C7 / ATCC BAA-1331).